Consider the following 515-residue polypeptide: 2,3-bisphosphoglycerate-independent phosphoglycerate mutase 1 (515 aa).

Residues aspartate 14 and serine 64 each coordinate Mn(2+). Catalysis depends on serine 64, which acts as the Phosphoserine intermediate. Substrate contacts are provided by residues histidine 125, 155–156 (RD), arginine 187, arginine 193, 264–267 (RADR), and lysine 337. Mn(2+) is bound by residues aspartate 404, histidine 408, aspartate 445, histidine 446, and histidine 464.

It belongs to the BPG-independent phosphoglycerate mutase family. Mn(2+) serves as cofactor.

The enzyme catalyses (2R)-2-phosphoglycerate = (2R)-3-phosphoglycerate. Its pathway is carbohydrate degradation; glycolysis; pyruvate from D-glyceraldehyde 3-phosphate: step 3/5. Functionally, catalyzes the interconversion of 2-phosphoglycerate and 3-phosphoglycerate. The protein is 2,3-bisphosphoglycerate-independent phosphoglycerate mutase 1 of Methanosarcina acetivorans (strain ATCC 35395 / DSM 2834 / JCM 12185 / C2A).